The primary structure comprises 311 residues: Malate dehydrogenase (311 aa).

10 to 15 lines the NAD(+) pocket; sequence GAGHTG. The substrate site is built by Arg85 and Arg91. NAD(+) contacts are provided by residues Asn98 and 121 to 123; that span reads LTN. Positions 123 and 154 each coordinate substrate. The active-site Proton acceptor is His178.

Belongs to the LDH/MDH superfamily. MDH type 3 family.

The catalysed reaction is (S)-malate + NAD(+) = oxaloacetate + NADH + H(+). Catalyzes the reversible oxidation of malate to oxaloacetate. This Staphylococcus carnosus (strain TM300) protein is Malate dehydrogenase.